The following is a 189-amino-acid chain: MTTEVELVVLADSEGNPIGTAPKATVHTKDTPLHFAFSTYILNPRGELLVTRRALSKKTWPGVWTNSMCGHPGPDETNADAIRRRGVDELGLEVDSFLDIQEILPDYQYRAVDASGIVEWELCPVHLVRLAVGEFVEPLDDEVEEFEWAEPQKLFDAVDATPFVFSPWLVDQLSAPELRQAILEAFDAE.

Histidine 27 and histidine 34 together coordinate Mn(2+). In terms of domain architecture, Nudix hydrolase spans 32-171 (PLHFAFSTYI…PFVFSPWLVD (140 aa)). Cysteine 69 is a catalytic residue. Cysteine 69 is a binding site for Mg(2+). Histidine 71 lines the Mn(2+) pocket. Glutamate 89 lines the Mg(2+) pocket. Residues glutamate 119 and glutamate 121 each coordinate Mn(2+). The active site involves glutamate 121.

This sequence belongs to the IPP isomerase type 1 family. Mg(2+) serves as cofactor. Mn(2+) is required as a cofactor.

It localises to the cytoplasm. It catalyses the reaction isopentenyl diphosphate = dimethylallyl diphosphate. It functions in the pathway isoprenoid biosynthesis; dimethylallyl diphosphate biosynthesis; dimethylallyl diphosphate from isopentenyl diphosphate: step 1/1. Catalyzes the 1,3-allylic rearrangement of the homoallylic substrate isopentenyl (IPP) to its highly electrophilic allylic isomer, dimethylallyl diphosphate (DMAPP). This chain is Isopentenyl-diphosphate Delta-isomerase, found in Corynebacterium glutamicum (strain ATCC 13032 / DSM 20300 / JCM 1318 / BCRC 11384 / CCUG 27702 / LMG 3730 / NBRC 12168 / NCIMB 10025 / NRRL B-2784 / 534).